Reading from the N-terminus, the 233-residue chain is 2-C-methyl-D-erythritol 4-phosphate cytidylyltransferase (233 aa).

The protein belongs to the IspD/TarI cytidylyltransferase family. IspD subfamily.

It catalyses the reaction 2-C-methyl-D-erythritol 4-phosphate + CTP + H(+) = 4-CDP-2-C-methyl-D-erythritol + diphosphate. The protein operates within isoprenoid biosynthesis; isopentenyl diphosphate biosynthesis via DXP pathway; isopentenyl diphosphate from 1-deoxy-D-xylulose 5-phosphate: step 2/6. In terms of biological role, catalyzes the formation of 4-diphosphocytidyl-2-C-methyl-D-erythritol from CTP and 2-C-methyl-D-erythritol 4-phosphate (MEP). In Nitrosomonas eutropha (strain DSM 101675 / C91 / Nm57), this protein is 2-C-methyl-D-erythritol 4-phosphate cytidylyltransferase.